Here is a 662-residue protein sequence, read N- to C-terminus: Tubulin--tyrosine ligase-like protein 12 (662 aa).

One can recognise a TTL domain in the interval 324-660 (LKKRKIKVYA…LDEIDPTKVT (337 aa)). ATP is bound by residues 472–475 (CEYI), Lys491, and Asp493.

This sequence belongs to the tubulin--tyrosine ligase family.

Regulates microtubule dynamics in uterine muscle cells. The protein is Tubulin--tyrosine ligase-like protein 12 of Caenorhabditis elegans.